Consider the following 221-residue polypeptide: Secreted protein BARF1 (221 aa).

An N-terminal signal peptide occupies residues 1 to 20; it reads MARFIAQLLLLASCVAAGQA. Ig-like domains lie at 21–120 and 124–220; these read VTAF…EHLS and PLTL…GYLS. Asn95 carries an N-linked (GlcNAc...) asparagine; by host glycan. Cys146 and Cys201 are joined by a disulfide.

In terms of assembly, homohexamer. Interacts with human CSF1. In terms of processing, phosphorylated on serine and threonine by host.

It is found in the secreted. In terms of biological role, plays diverse functions in immunomodulation and oncogenicity, maybe by acting as a functional receptor for human CSF1. May inhibit interferon secretion from mononuclear cells. Exhibits oncogenic activity in vitro. This Epstein-Barr virus (strain B95-8) (HHV-4) protein is Secreted protein BARF1.